The primary structure comprises 568 residues: Oxygen-dependent choline dehydrogenase (568 aa).

D8–E37 is an FAD binding site. H473 functions as the Proton acceptor in the catalytic mechanism.

The protein belongs to the GMC oxidoreductase family. FAD is required as a cofactor.

The catalysed reaction is choline + A = betaine aldehyde + AH2. It catalyses the reaction betaine aldehyde + NAD(+) + H2O = glycine betaine + NADH + 2 H(+). The protein operates within amine and polyamine biosynthesis; betaine biosynthesis via choline pathway; betaine aldehyde from choline (cytochrome c reductase route): step 1/1. Functionally, involved in the biosynthesis of the osmoprotectant glycine betaine. Catalyzes the oxidation of choline to betaine aldehyde and betaine aldehyde to glycine betaine at the same rate. This chain is Oxygen-dependent choline dehydrogenase, found in Staphylococcus haemolyticus (strain JCSC1435).